The following is a 226-amino-acid chain: Exopolysaccharide production protein ExoY (226 aa).

The chain crosses the membrane as a helical span at residues 34–54; that stretch reads VLIAILALIALSPLFLLVMGL.

The protein belongs to the bacterial sugar transferase family.

Its subcellular location is the cell membrane. Its pathway is glycan metabolism; exopolysaccharide biosynthesis. Its function is as follows. Needed for the addition of the first sugar (galactose) to the isoprenoid carrier. May function as a sugar transferase. The protein is Exopolysaccharide production protein ExoY (exoY) of Sinorhizobium fredii (strain NBRC 101917 / NGR234).